Here is a 569-residue protein sequence, read N- to C-terminus: Pyruvate decarboxylase (569 aa).

Residues Asp-38 and His-124 each contribute to the pyruvate site. Thiamine diphosphate is bound by residues Thr-398 and 421–423; that span reads GSI. Residue Asp-451 coordinates Mg(2+). Residues 452-453 and 478-483 each bind thiamine diphosphate; these read GS and NEGYTI. Positions 478 and 480 each coordinate Mg(2+). Glu-484 lines the pyruvate pocket.

It belongs to the TPP enzyme family. As to quaternary structure, homotetramer. Mg(2+) is required as a cofactor. The cofactor is thiamine diphosphate.

The catalysed reaction is a 2-oxocarboxylate + H(+) = an aldehyde + CO2. The enzyme catalyses pyruvate + H(+) = acetaldehyde + CO2. The sequence is that of Pyruvate decarboxylase (pdcA) from Aspergillus fumigatus (strain ATCC MYA-4609 / CBS 101355 / FGSC A1100 / Af293) (Neosartorya fumigata).